Consider the following 547-residue polypeptide: CDK5RAP1-like protein (547 aa).

The 116-residue stretch at 79 to 194 folds into the MTTase N-terminal domain; the sequence is RTVCYVTYGC…LPRLVAVAAG (116 aa). Positions 88, 124, 157, 232, 236, and 239 each coordinate [4Fe-4S] cluster. The Radical SAM core domain occupies 218–475; sequence DSASKTAFIS…TTVFREEALK (258 aa). In terms of domain architecture, TRAM spans 478–543; that stretch reads QALIGSEQTV…SQTLKAQLIG (66 aa).

It belongs to the methylthiotransferase family. MiaB subfamily. [4Fe-4S] cluster is required as a cofactor.

In terms of biological role, potential regulator of CDK5 activity. The chain is CDK5RAP1-like protein from Caenorhabditis elegans.